The chain runs to 154 residues: Cindoxin (154 aa).

In terms of domain architecture, Flavodoxin-like spans 3–145 (ALILYGTETG…TAEEWAREIL (143 aa)). FMN-binding positions include 9–13 (TETGN) and 89–120 (VFGLGDSYYTTFNQAGATAATILASLGGTQVG).

FMN serves as cofactor.

In terms of biological role, involved in the degradation of cineol (eucalyptol). The FMN protein, cindoxin, shuttles electrons between the FAD-containing cindoxin reductase (CinB) and 1,8-cineole 2-endo-monooxygenase (CinA). In Citrobacter braakii, this protein is Cindoxin (cinC).